Consider the following 461-residue polypeptide: Cysteine--tRNA ligase (461 aa).

Residue Cys28 coordinates Zn(2+). A 'HIGH' region motif is present at residues 30-40; that stretch reads ITVYDLCHIGH. Residues Cys209, His234, and Glu238 each contribute to the Zn(2+) site. The 'KMSKS' region motif lies at 266–270; that stretch reads KMSKS. Lys269 is a binding site for ATP.

This sequence belongs to the class-I aminoacyl-tRNA synthetase family. Monomer. Zn(2+) is required as a cofactor.

The protein resides in the cytoplasm. It catalyses the reaction tRNA(Cys) + L-cysteine + ATP = L-cysteinyl-tRNA(Cys) + AMP + diphosphate. The chain is Cysteine--tRNA ligase from Escherichia coli O157:H7.